The following is a 120-amino-acid chain: NAD(P)H-quinone oxidoreductase subunit 3, chloroplastic (120 aa).

3 helical membrane passes run 10 to 30 (FLVF…ASKL), 64 to 84 (MFAL…PWAV), and 89 to 109 (MGFI…VGLV).

It belongs to the complex I subunit 3 family. In terms of assembly, NDH is composed of at least 16 different subunits, 5 of which are encoded in the nucleus.

The protein resides in the plastid. The protein localises to the chloroplast thylakoid membrane. It catalyses the reaction a plastoquinone + NADH + (n+1) H(+)(in) = a plastoquinol + NAD(+) + n H(+)(out). It carries out the reaction a plastoquinone + NADPH + (n+1) H(+)(in) = a plastoquinol + NADP(+) + n H(+)(out). Its function is as follows. NDH shuttles electrons from NAD(P)H:plastoquinone, via FMN and iron-sulfur (Fe-S) centers, to quinones in the photosynthetic chain and possibly in a chloroplast respiratory chain. The immediate electron acceptor for the enzyme in this species is believed to be plastoquinone. Couples the redox reaction to proton translocation, and thus conserves the redox energy in a proton gradient. The protein is NAD(P)H-quinone oxidoreductase subunit 3, chloroplastic of Chlorokybus atmophyticus (Soil alga).